The sequence spans 750 residues: Photosystem I P700 chlorophyll a apoprotein A1 (750 aa).

8 helical membrane passes run 70 to 93 (VFSAHFGQLSIIFLWLSGMYFHGA), 156 to 179 (LYCTAIGALIFAALMLFAGWFHYH), 195 to 219 (LNHHLAGLLGLGSLSWAGHQVHVSL), 291 to 309 (TAHHHLAIAILFLIAGHMY), 346 to 369 (WHAQLSLNLAMLGSLTIVVAHHMY), 385 to 411 (LSLFTHHMWIGGFLIVGAAAHAAIFMV), 433 to 455 (AIISHLNWACIFLGFHSFGLYIH), and 531 to 549 (FLVHHIHAFTIHVTVLILL). Cys573 and Cys582 together coordinate [4Fe-4S] cluster. The next 2 membrane-spanning stretches (helical) occupy residues 589 to 610 (HVFLGLFWMYNSISVVIFHFSW) and 664 to 686 (LSAYGLFFLGAHFVWAFSLMFLF). His675 contacts chlorophyll a'. Residues Met683 and Tyr691 each contribute to the chlorophyll a site. Trp692 lines the phylloquinone pocket. A helical transmembrane segment spans residues 724 to 744 (AVGVTHYLLGGIATTWAFFLA).

Belongs to the PsaA/PsaB family. In terms of assembly, the PsaA/B heterodimer binds the P700 chlorophyll special pair and subsequent electron acceptors. PSI consists of a core antenna complex that captures photons, and an electron transfer chain that converts photonic excitation into a charge separation. The eukaryotic PSI reaction center is composed of at least 11 subunits. Requires P700 is a chlorophyll a/chlorophyll a' dimer, A0 is one or more chlorophyll a, A1 is one or both phylloquinones and FX is a shared 4Fe-4S iron-sulfur center. as cofactor.

It is found in the plastid. It localises to the chloroplast thylakoid membrane. It carries out the reaction reduced [plastocyanin] + hnu + oxidized [2Fe-2S]-[ferredoxin] = oxidized [plastocyanin] + reduced [2Fe-2S]-[ferredoxin]. PsaA and PsaB bind P700, the primary electron donor of photosystem I (PSI), as well as the electron acceptors A0, A1 and FX. PSI is a plastocyanin-ferredoxin oxidoreductase, converting photonic excitation into a charge separation, which transfers an electron from the donor P700 chlorophyll pair to the spectroscopically characterized acceptors A0, A1, FX, FA and FB in turn. Oxidized P700 is reduced on the lumenal side of the thylakoid membrane by plastocyanin. The polypeptide is Photosystem I P700 chlorophyll a apoprotein A1 (Helianthus annuus (Common sunflower)).